The sequence spans 361 residues: tRNA/tmRNA (uracil-C(5))-methyltransferase (361 aa).

5 residues coordinate S-adenosyl-L-methionine: Gln185, Tyr213, Asn218, Glu234, and Asp294. The active-site Nucleophile is Cys319. The active-site Proton acceptor is Glu353.

This sequence belongs to the class I-like SAM-binding methyltransferase superfamily. RNA M5U methyltransferase family. TrmA subfamily.

The catalysed reaction is uridine(54) in tRNA + S-adenosyl-L-methionine = 5-methyluridine(54) in tRNA + S-adenosyl-L-homocysteine + H(+). It carries out the reaction uridine(341) in tmRNA + S-adenosyl-L-methionine = 5-methyluridine(341) in tmRNA + S-adenosyl-L-homocysteine + H(+). In terms of biological role, dual-specificity methyltransferase that catalyzes the formation of 5-methyluridine at position 54 (m5U54) in all tRNAs, and that of position 341 (m5U341) in tmRNA (transfer-mRNA). In Pseudomonas savastanoi pv. phaseolicola (strain 1448A / Race 6) (Pseudomonas syringae pv. phaseolicola (strain 1448A / Race 6)), this protein is tRNA/tmRNA (uracil-C(5))-methyltransferase.